A 302-amino-acid polypeptide reads, in one-letter code: Giardin subunit alpha-5 (302 aa).

4 Annexin repeats span residues 1–72, 74–144, 153–226, and 230–298; these read MTST…VNMW, SRHE…VAGW, GSVE…AAHF, and GLPV…TLWR.

The protein belongs to the annexin family. Giardin subunit alpha subfamily.

The protein localises to the cytoplasm. The protein resides in the cytoskeleton. Its function is as follows. Giardins are involved in parasite attachment to the intestinal mucosa and in the cytoskeletal disassembly and reassembly that marks the transition from infectious trophozoite to transmissible cyst. They may interact with other cytoskeletal proteins such as microtubules in the microribbons or crossbridges, to maintain the integrity of the ventral disk. The chain is Giardin subunit alpha-5 from Giardia intestinalis (Giardia lamblia).